The primary structure comprises 409 residues: Protein a6 (409 aa).

Ser-86 is subject to Phosphoserine. The span at 106–120 (RAHRTGRRQAPRRAA) shows a compositional bias: basic residues. The tract at residues 106–165 (RAHRTGRRQAPRRAATHSYPVTDSILITSDDEHNEQEPSSTARVRSQLSMRSPPPLAPLT) is disordered. Residue Thr-133 is modified to Phosphothreonine. Ser-134 carries the post-translational modification Phosphoserine. The span at 142-155 (EPSSTARVRSQLSM) shows a compositional bias: polar residues.

The chain is Protein a6 (a6) from Drosophila melanogaster (Fruit fly).